A 228-amino-acid chain; its full sequence is 5'-methylthioadenosine/S-adenosylhomocysteine nucleosidase (228 aa).

Glu11 functions as the Proton acceptor in the catalytic mechanism. Substrate contacts are provided by residues Gly77, Ile151, and 172 to 173; that span reads ME. Catalysis depends on Asp196, which acts as the Proton donor.

The protein belongs to the PNP/UDP phosphorylase family. MtnN subfamily.

It carries out the reaction S-adenosyl-L-homocysteine + H2O = S-(5-deoxy-D-ribos-5-yl)-L-homocysteine + adenine. It catalyses the reaction S-methyl-5'-thioadenosine + H2O = 5-(methylsulfanyl)-D-ribose + adenine. The enzyme catalyses 5'-deoxyadenosine + H2O = 5-deoxy-D-ribose + adenine. Its pathway is amino-acid biosynthesis; L-methionine biosynthesis via salvage pathway; S-methyl-5-thio-alpha-D-ribose 1-phosphate from S-methyl-5'-thioadenosine (hydrolase route): step 1/2. Its function is as follows. Catalyzes the irreversible cleavage of the glycosidic bond in both 5'-methylthioadenosine (MTA) and S-adenosylhomocysteine (SAH/AdoHcy) to adenine and the corresponding thioribose, 5'-methylthioribose and S-ribosylhomocysteine, respectively. Also cleaves 5'-deoxyadenosine, a toxic by-product of radical S-adenosylmethionine (SAM) enzymes, into 5-deoxyribose and adenine. The polypeptide is 5'-methylthioadenosine/S-adenosylhomocysteine nucleosidase (Staphylococcus epidermidis (strain ATCC 12228 / FDA PCI 1200)).